The following is a 451-amino-acid chain: UPF0761 membrane protein Hhal_0704 (451 aa).

6 helical membrane-spanning segments follow: residues 66-86 (LLAIVPLMTIGFSVLAAFPVF), 122-142 (ELTAVGIAGLTVTALLLLNTI), 162-182 (FMVYWTVLTMGPLLLGVSVAS), 204-224 (LLNLAPFVVQAIVFSLIYSLV), 228-248 (SVPVLHAVIGGVVASGLFELA), and 268-288 (ALAALPIFLVWLYISWLVILI).

Belongs to the UPF0761 family.

The protein localises to the cell inner membrane. This chain is UPF0761 membrane protein Hhal_0704, found in Halorhodospira halophila (strain DSM 244 / SL1) (Ectothiorhodospira halophila (strain DSM 244 / SL1)).